The chain runs to 312 residues: Cell division control protein 2 homolog D (312 aa).

Residues 14–304 (FVKLEKVGEG…AKKAMEHPYF (291 aa)) enclose the Protein kinase domain. Residues 20-28 (VGEGTYGKV) and lysine 43 contribute to the ATP site. Threonine 24 is subject to Phosphothreonine. Position 25 is a phosphotyrosine (tyrosine 25). The Proton acceptor role is filled by aspartate 145. Threonine 179 bears the Phosphothreonine; by CAK mark.

This sequence belongs to the protein kinase superfamily. CMGC Ser/Thr protein kinase family. CDC2/CDKX subfamily.

The catalysed reaction is L-seryl-[protein] + ATP = O-phospho-L-seryl-[protein] + ADP + H(+). It catalyses the reaction L-threonyl-[protein] + ATP = O-phospho-L-threonyl-[protein] + ADP + H(+). The enzyme catalyses [DNA-directed RNA polymerase] + ATP = phospho-[DNA-directed RNA polymerase] + ADP + H(+). Its function is as follows. Plays a key role in the control of the eukaryotic cell cycle. The sequence is that of Cell division control protein 2 homolog D (CDC2D) from Antirrhinum majus (Garden snapdragon).